Consider the following 134-residue polypeptide: Small ribosomal subunit protein bS16 (134 aa).

The disordered stretch occupies residues 79–134; sequence AGIAKRPSRNNPTKGEPGKKAQERLALAKQAEEEASAKAAEAAAAAAAPAEEAASE. Over residues 115–134 the composition is skewed to low complexity; it reads AKAAEAAAAAAAPAEEAASE.

This sequence belongs to the bacterial ribosomal protein bS16 family.

The polypeptide is Small ribosomal subunit protein bS16 (Brucella abortus (strain S19)).